Consider the following 64-residue polypeptide: Probable cytochrome c oxidase subunit 5C-1 (64 aa).

A helical transmembrane segment spans residues 15–34 (SVVKELFIGLALGLAAGGLW).

This sequence belongs to the cytochrome c oxidase subunit 5C family.

The protein resides in the mitochondrion inner membrane. Its function is as follows. This protein is one of the nuclear-coded polypeptide chains of cytochrome c oxidase, the terminal oxidase in mitochondrial electron transport. This is Probable cytochrome c oxidase subunit 5C-1 from Arabidopsis thaliana (Mouse-ear cress).